Here is a 462-residue protein sequence, read N- to C-terminus: dTDP-4-dehydro-2,6-dideoxy-D-glucose 3-dehydratase (462 aa).

Residues glycine 112–serine 113, aspartate 220, and serine 241 contribute to the pyridoxal 5'-phosphate site. The active-site Proton donor/acceptor is the histidine 246. Pyridoxal 5'-phosphate is bound at residue asparagine 314.

Belongs to the DegT/DnrJ/EryC1 family. Homodimer. Pyridoxal 5'-phosphate is required as a cofactor.

The catalysed reaction is dTDP-4-dehydro-2,6-dideoxy-alpha-D-glucose + 2 reduced [2Fe-2S]-[ferredoxin] + 2 H(+) = dTDP-4-dehydro-2,3,6-trideoxy-alpha-D-hexopyranose + 2 oxidized [2Fe-2S]-[ferredoxin] + H2O. Involved in the biosynthesis of forosamine ((4-dimethylamino)-2,3,4,6-tetradeoxy-alpha-D-threo-hexopyranose), a highly deoxygenated sugar component of several bioactive natural products such as the insecticidal spinosyns A and D. Catalyzes C-3 deoxygenation of dTDP-4-keto-2,6-dideoxy-alpha-D-glucose to yield dTDP-4-keto-2,3,6-trideoxy-D-glucose via a combined transamination-deoxygenation reaction. The catalysis is initiated by a transamination step in which pyridoxal 5'-phosphate (PLP) is converted to pyridoxamine 5'-phosphate (PMP) in the presence of L-glutamate. This coenzyme then forms a Schiff base with dTDP-4-keto-2,6-dideoxy-alpha-D-glucose and the resulting adduct undergoes a PMP-mediated beta-dehydration reaction to give a sugar enamine intermediate, which after a 2 electrons reduction and hydrolysis yields dTDP-4-keto-2,3,6-trideoxy-D-glucose as a product. Requires cellular reductase (ferredoxin or flavodoxin reductase) rather than a specific partner reductase. L-glutamate is 20-fold more efficient than L-aspartate as an amino donor. In the absence of an electron source and in the presence of L-glutamate, catalyzes a transamination reaction, converting dTDP-4-keto-2,6-dideoxy-alpha-D-glucose to dTDP-4-amino-2,4,6-trideoxy-D-glucose. The sequence is that of dTDP-4-dehydro-2,6-dideoxy-D-glucose 3-dehydratase from Saccharopolyspora spinosa.